The following is a 115-amino-acid chain: Pro-neuregulin-4, membrane-bound isoform (115 aa).

Residues 1 to 62 lie on the Extracellular side of the membrane; it reads MPTDHEEPCG…SSIQTKSNLF (62 aa). The EGF-like domain occupies 5 to 46; it reads HEEPCGPSHKSFCLNGGLCYVIPTIPSPFCRCVENYTGARCE. 3 disulfide bridges follow: Cys9/Cys23, Cys17/Cys34, and Cys36/Cys45. A glycan (N-linked (GlcNAc...) asparagine) is linked at Asn39. A helical membrane pass occupies residues 63–83; it reads EAFVALAVLVTLIIGAFYFLC. The Cytoplasmic portion of the chain corresponds to 84 to 115; sequence RKGHFQRASSVQYDINLVETSSTSAHHSHEQH.

This sequence belongs to the neuregulin family. Interacts with ERBB4. In terms of processing, proteolytic cleavage close to the plasma membrane on the external face leads to the release of the soluble growth factor form. Post-translationally, extensive glycosylation precedes the proteolytic cleavage.

The protein localises to the cell membrane. It is found in the secreted. In terms of biological role, low affinity ligand for the ERBB4 tyrosine kinase receptor. Concomitantly recruits ERBB1 and ERBB2 coreceptors, resulting in ligand-stimulated tyrosine phosphorylation and activation of the ERBB receptors. Does not bind to the ERBB1, ERBB2 and ERBB3 receptors. This Homo sapiens (Human) protein is Pro-neuregulin-4, membrane-bound isoform (NRG4).